Reading from the N-terminus, the 254-residue chain is H-2 class II histocompatibility antigen, I-E alpha chain (254 aa).

The signal sequence occupies residues 1 to 24 (RSRALILGVLALTTMLSLCGGEDD). The segment at 25-109 (IEADHVAFYG…KDSNFTPAAN (85 aa)) is alpha-1. Over 25–216 (IEADHVAFYG…IPAPMSELTE (192 aa)) the chain is Extracellular. Residues asparagine 103 and asparagine 143 are each glycosylated (N-linked (GlcNAc...) asparagine). The segment at 110 to 203 (EAPQATVFPK…GLEEPVLKHW (94 aa)) is alpha-2. In terms of domain architecture, Ig-like C1-type spans 112–204 (PQATVFPKSP…LEEPVLKHWE (93 aa)). Residues cysteine 132 and cysteine 188 are joined by a disulfide bond. The connecting peptide stretch occupies residues 204–216 (EPEIPAPMSELTE). The helical transmembrane segment at 217–242 (TVVCALGLSVGLVGIVVGTIFIIQGL) threads the bilayer. Residues 243–254 (RSGGTSRHPGPL) lie on the Cytoplasmic side of the membrane.

Belongs to the MHC class II family.

Its subcellular location is the membrane. The polypeptide is H-2 class II histocompatibility antigen, I-E alpha chain (Mus musculus (Mouse)).